Consider the following 313-residue polypeptide: 3'-5' exoribonuclease YhaM (313 aa).

A DNA-binding region (OB) is located at residues 22–90; that stretch reads SSVKGTASNG…QLKIRQIRQA (69 aa). The region spanning 163–279 is the HD domain; that stretch reads HVVSMLRLAK…LHQIDLMDAS (117 aa).

It belongs to the YhaM family.

Shows a 3'-5' exoribonuclease activity. This Listeria innocua serovar 6a (strain ATCC BAA-680 / CLIP 11262) protein is 3'-5' exoribonuclease YhaM.